The sequence spans 364 residues: DNA-(apurinic or apyrimidinic site) endonuclease (364 aa).

Basic and acidic residues-rich tracts occupy residues 1–12 (MKRFFKPIEKEN) and 23–39 (PEKR…EKNQ). Residues 1-42 (MKRFFKPIEKENSPAAKKPCLSPEKRDGDGDGVEEEKNQNEP) are disordered. Position 80 (Glu80) interacts with Mg(2+). Tyr182 is a catalytic residue. Mg(2+) contacts are provided by Asp222, Asn224, and Asp342. Asp222 serves as the catalytic Proton donor/acceptor.

Belongs to the DNA repair enzymes AP/exoA family. Interacts with ROS1. ROS1 is required for APE1L to stably associate with the DNA substrate. It depends on Mg(2+) as a cofactor. As to expression, expressed in leaves, flower buds and developing siliques. Not detected in roots.

It is found in the nucleus. Its subcellular location is the nucleolus. In terms of biological role, apurinic/apyrimidinic (AP) endonuclease involved in active DNA demethylation and gene imprinting. According to a report, also displays an in vitro 3'-phosphatase activity. According to another report, has no in vitro 3'-phosphatase activity. Catalyzes the conversion of the 3'-blocking groups 3'-phosphor-alpha,beta-unsaturated aldehyde (3'-PUA) generated by ROS1 to 3'-OH. Has a strong non-specific affinity to DNA. Redundant with APE2 and at least one functional allele is required for seed viability. This chain is DNA-(apurinic or apyrimidinic site) endonuclease, found in Arabidopsis thaliana (Mouse-ear cress).